Reading from the N-terminus, the 394-residue chain is Elongation factor Tu (394 aa).

One can recognise a tr-type G domain in the interval 10–204 (KPHVNVGTIG…HLDTYIPEPE (195 aa)). Positions 19–26 (GHVDHGKT) are G1. 19-26 (GHVDHGKT) contacts GTP. Thr26 provides a ligand contact to Mg(2+). The segment at 60–64 (GITIN) is G2. Positions 81-84 (DCPG) are G3. Residues 81–85 (DCPGH) and 136–139 (NKCD) each bind GTP. A G4 region spans residues 136–139 (NKCD). The segment at 174 to 176 (SAL) is G5.

It belongs to the TRAFAC class translation factor GTPase superfamily. Classic translation factor GTPase family. EF-Tu/EF-1A subfamily. In terms of assembly, monomer.

It is found in the cytoplasm. The catalysed reaction is GTP + H2O = GDP + phosphate + H(+). Its function is as follows. GTP hydrolase that promotes the GTP-dependent binding of aminoacyl-tRNA to the A-site of ribosomes during protein biosynthesis. The chain is Elongation factor Tu from Klebsiella pneumoniae subsp. pneumoniae (strain ATCC 700721 / MGH 78578).